Here is a 456-residue protein sequence, read N- to C-terminus: UDP-N-acetylmuramate--L-alanine ligase (456 aa).

118–124 (GTHGKST) provides a ligand contact to ATP.

It belongs to the MurCDEF family.

It localises to the cytoplasm. The enzyme catalyses UDP-N-acetyl-alpha-D-muramate + L-alanine + ATP = UDP-N-acetyl-alpha-D-muramoyl-L-alanine + ADP + phosphate + H(+). It participates in cell wall biogenesis; peptidoglycan biosynthesis. In terms of biological role, cell wall formation. This chain is UDP-N-acetylmuramate--L-alanine ligase, found in Paenarthrobacter aurescens (strain TC1).